The sequence spans 156 residues: Transcription antitermination protein NusB (156 aa).

The protein belongs to the NusB family.

Functionally, involved in transcription antitermination. Required for transcription of ribosomal RNA (rRNA) genes. Binds specifically to the boxA antiterminator sequence of the ribosomal RNA (rrn) operons. This chain is Transcription antitermination protein NusB, found in Xanthomonas oryzae pv. oryzae (strain MAFF 311018).